Consider the following 388-residue polypeptide: MRYFTAGESHGPRLTAIIEGVPAGLSLSAEDINIELKRRQGGYGRGGRMKIESDQVEITSGVRHGKTIGSPITLNVTNRDFKNWEQIMAAQDVEDKIKKQRRLTKPRPGHADLVGGMKYEFEDLRNVLERSSARETTMRVAVGAVAKKLLHELEIEVANHVVNFGGREISSPEHLSVQEIRETAGRSDLSIFDESQAEDLRTYIDQIKKAGDTIGGIIETRVEGVPAGLGSYVQYDRKLDAKIAGAVVSINAFKGVEFGLGFEAGKRPGSQVMDEIIWSENKGYTRSSNQLGGFEGGMTNGEQLIVRGVMKPIPTLYKPLMSIDTESHEPYKASVERSDPTALPAAGVVMENVVATVVAQEICDKFNSDTINELKKALVDYKKRLSEY.

Arg39 and Arg45 together coordinate NADP(+). Residues 130 to 132 (RSS), 251 to 252 (NA), Gly296, 311 to 315 (KPIPT), and Arg337 contribute to the FMN site.

The protein belongs to the chorismate synthase family. As to quaternary structure, homotetramer. The cofactor is FMNH2.

The catalysed reaction is 5-O-(1-carboxyvinyl)-3-phosphoshikimate = chorismate + phosphate. It functions in the pathway metabolic intermediate biosynthesis; chorismate biosynthesis; chorismate from D-erythrose 4-phosphate and phosphoenolpyruvate: step 7/7. Catalyzes the anti-1,4-elimination of the C-3 phosphate and the C-6 proR hydrogen from 5-enolpyruvylshikimate-3-phosphate (EPSP) to yield chorismate, which is the branch point compound that serves as the starting substrate for the three terminal pathways of aromatic amino acid biosynthesis. This reaction introduces a second double bond into the aromatic ring system. The polypeptide is Chorismate synthase (Lactococcus lactis subsp. cremoris (strain MG1363)).